We begin with the raw amino-acid sequence, 210 residues long: Probable GTP-binding protein EngB (210 aa).

One can recognise an EngB-type G domain in the interval 22–198; the sequence is FLPEYAFIGR…LTYIDEVNQE (177 aa). GTP-binding positions include 30–37, 57–61, 75–78, 142–145, and 177–179; these read GRSNVGKS, GKTQL, DLPG, TKAD, and TSS. Residues serine 37 and threonine 59 each coordinate Mg(2+).

Belongs to the TRAFAC class TrmE-Era-EngA-EngB-Septin-like GTPase superfamily. EngB GTPase family. Mg(2+) is required as a cofactor.

Its function is as follows. Necessary for normal cell division and for the maintenance of normal septation. This is Probable GTP-binding protein EngB from Flavobacterium johnsoniae (strain ATCC 17061 / DSM 2064 / JCM 8514 / BCRC 14874 / CCUG 350202 / NBRC 14942 / NCIMB 11054 / UW101) (Cytophaga johnsonae).